The chain runs to 164 residues: NAD(P)H-quinone oxidoreductase subunit I, chloroplastic (164 aa).

2 4Fe-4S ferredoxin-type domains span residues 55–84 (GRIH…VDWK) and 95–124 (LNYS…MTEE). Residues C64, C67, C70, C74, C104, C107, C110, and C114 each contribute to the [4Fe-4S] cluster site.

This sequence belongs to the complex I 23 kDa subunit family. NDH is composed of at least 16 different subunits, 5 of which are encoded in the nucleus. It depends on [4Fe-4S] cluster as a cofactor.

It is found in the plastid. The protein resides in the chloroplast thylakoid membrane. The catalysed reaction is a plastoquinone + NADH + (n+1) H(+)(in) = a plastoquinol + NAD(+) + n H(+)(out). It carries out the reaction a plastoquinone + NADPH + (n+1) H(+)(in) = a plastoquinol + NADP(+) + n H(+)(out). NDH shuttles electrons from NAD(P)H:plastoquinone, via FMN and iron-sulfur (Fe-S) centers, to quinones in the photosynthetic chain and possibly in a chloroplast respiratory chain. The immediate electron acceptor for the enzyme in this species is believed to be plastoquinone. Couples the redox reaction to proton translocation, and thus conserves the redox energy in a proton gradient. This chain is NAD(P)H-quinone oxidoreductase subunit I, chloroplastic, found in Daucus carota (Wild carrot).